The primary structure comprises 617 residues: UvrABC system protein C (617 aa).

In terms of domain architecture, GIY-YIG spans 22-100 (NLPGVYRFFN…IKALSPKYNI (79 aa)). The UVR domain occupies 209-244 (DELTRTLQHKMQTAAANLQFEEAARYRDQIQALGIM).

It belongs to the UvrC family. In terms of assembly, interacts with UvrB in an incision complex.

Its subcellular location is the cytoplasm. In terms of biological role, the UvrABC repair system catalyzes the recognition and processing of DNA lesions. UvrC both incises the 5' and 3' sides of the lesion. The N-terminal half is responsible for the 3' incision and the C-terminal half is responsible for the 5' incision. The chain is UvrABC system protein C from Neisseria meningitidis serogroup B (strain ATCC BAA-335 / MC58).